The following is a 148-amino-acid chain: Troponin C (148 aa).

EF-hand domains follow at residues 8–43 (KQFN…LALH), 44–79 (VSDD…KVQE), 81–116 (EDER…LGDD), and 117–148 (LNDD…LMLG). Positions 130, 132, 134, 136, and 141 each coordinate Ca(2+).

This sequence belongs to the troponin C family.

Troponin is the central regulatory protein of striated muscle contraction. Tn consists of three components: Tn-I which is the inhibitor of actomyosin ATPase, Tn-T which contains the binding site for tropomyosin and Tn-C. The binding of calcium to Tn-C abolishes the inhibitory action of Tn on actin filaments. The polypeptide is Troponin C (Todarodes pacificus (Japanese flying squid)).